A 563-amino-acid chain; its full sequence is Sperm-tail PG-rich repeat-containing protein 2 (563 aa).

3 STPGR repeats span residues 21–34 (VGPGTYQVPFPKQQ), 63–73 (PGPAHYNVSQA), and 97–107 (GPGPASYDCPY). Residues 131–163 (IPSIPSSGKSHGYHLNEDDTIMRRTPPSSDKTM) form a disordered region. 7 STPGR repeats span residues 200 to 219 (GPGPGHYDIIQKRKLRYENI), 250 to 263 (PGPGKYNIKSQFDH), 292 to 321 (TPAPGTYNETRTAFKVPKKRSGLFSPFGQR), 334 to 353 (LPGPGFYDISTNIVKAQVKK), 423 to 438 (LPAPGCYDVQKSYDMS), 473 to 483 (GPGPATYNPIL), and 507 to 518 (SPGPTTYELSPF).

This Rattus norvegicus (Rat) protein is Sperm-tail PG-rich repeat-containing protein 2 (Stpg2).